Here is a 418-residue protein sequence, read N- to C-terminus: UDP-N-acetylglucosamine 1-carboxyvinyltransferase 1 (418 aa).

22 to 23 (KN) is a binding site for phosphoenolpyruvate. R94 serves as a coordination point for UDP-N-acetyl-alpha-D-glucosamine. The active-site Proton donor is C118. C118 is modified (2-(S-cysteinyl)pyruvic acid O-phosphothioketal). UDP-N-acetyl-alpha-D-glucosamine-binding positions include 123–127 (RPIDL), D306, and I328.

This sequence belongs to the EPSP synthase family. MurA subfamily.

It localises to the cytoplasm. The enzyme catalyses phosphoenolpyruvate + UDP-N-acetyl-alpha-D-glucosamine = UDP-N-acetyl-3-O-(1-carboxyvinyl)-alpha-D-glucosamine + phosphate. The protein operates within cell wall biogenesis; peptidoglycan biosynthesis. Its function is as follows. Cell wall formation. Adds enolpyruvyl to UDP-N-acetylglucosamine. This Clostridium acetobutylicum (strain ATCC 824 / DSM 792 / JCM 1419 / IAM 19013 / LMG 5710 / NBRC 13948 / NRRL B-527 / VKM B-1787 / 2291 / W) protein is UDP-N-acetylglucosamine 1-carboxyvinyltransferase 1.